The following is a 169-amino-acid chain: Nascent polypeptide-associated complex subunit alpha (169 aa).

Positions 14–78 (NKNEKKAREM…AKIDNFSQKL (65 aa)) constitute an NAC-A/B domain. A disordered region spans residues 85–128 (IQSVSKSPEEIQKDMQLAADQAGDESAKPAAAAEEDDEAPVDAG). Positions 130–169 (LSAEDIELVASQANVSKNKAIKALKEHNGDIVNAIMALSK) constitute a UBA domain.

Belongs to the NAC-alpha family. As to quaternary structure, part of the nascent polypeptide-associated complex (NAC), consisting of EGD2 and EGD1. NAC associates with ribosomes via EGD1.

The protein localises to the cytoplasm. Its subcellular location is the nucleus. Its function is as follows. Component of the nascent polypeptide-associated complex (NAC), a dynamic component of the ribosomal exit tunnel, protecting the emerging polypeptides from interaction with other cytoplasmic proteins to ensure appropriate nascent protein targeting. The NAC complex also promotes mitochondrial protein import by enhancing productive ribosome interactions with the outer mitochondrial membrane and blocks the inappropriate interaction of ribosomes translating non-secretory nascent polypeptides with translocation sites in the membrane of the endoplasmic reticulum. EGD2 may also be involved in transcription regulation. This chain is Nascent polypeptide-associated complex subunit alpha (EGD2), found in Vanderwaltozyma polyspora (strain ATCC 22028 / DSM 70294 / BCRC 21397 / CBS 2163 / NBRC 10782 / NRRL Y-8283 / UCD 57-17) (Kluyveromyces polysporus).